Consider the following 296-residue polypeptide: Probable GTP 3',8-cyclase (296 aa).

Residues 5-230 (EYGRVVTNLR…HRRTQYFTPK (226 aa)) form the Radical SAM core domain. R14 serves as a coordination point for GTP. 2 residues coordinate [4Fe-4S] cluster: C21 and C25. An S-adenosyl-L-methionine-binding site is contributed by Y27. C28 provides a ligand contact to [4Fe-4S] cluster. K61 provides a ligand contact to GTP. G65 is a binding site for S-adenosyl-L-methionine. T89 contributes to the GTP binding site. S113 lines the S-adenosyl-L-methionine pocket. K150 serves as a coordination point for GTP. Residues C245 and C248 each contribute to the [4Fe-4S] cluster site. Position 250 to 252 (250 to 252 (RMR)) interacts with GTP. C262 is a [4Fe-4S] cluster binding site.

The protein belongs to the radical SAM superfamily. MoaA family. The cofactor is [4Fe-4S] cluster.

The catalysed reaction is GTP + AH2 + S-adenosyl-L-methionine = (8S)-3',8-cyclo-7,8-dihydroguanosine 5'-triphosphate + 5'-deoxyadenosine + L-methionine + A + H(+). The protein operates within cofactor biosynthesis; molybdopterin biosynthesis. Catalyzes the cyclization of GTP to (8S)-3',8-cyclo-7,8-dihydroguanosine 5'-triphosphate. In Archaeoglobus fulgidus (strain ATCC 49558 / DSM 4304 / JCM 9628 / NBRC 100126 / VC-16), this protein is Probable GTP 3',8-cyclase.